Here is a 173-residue protein sequence, read N- to C-terminus: MTLDDIKEMIREIPDFPKKGIRFKDITPVLKDAKAFNYSIEMLAKALEGRKFDLIAAPEARGFLFGAPLAFRLGVGFVPVRKPGKLPAETLSYEYELEYGLDSLEIHKDAVVKGQRVVIVDDLLATGGTVYASAKLVESLGGVVDSILFLTELTFLDGRKKLDGYDIISLIKF.

It belongs to the purine/pyrimidine phosphoribosyltransferase family. As to quaternary structure, homodimer.

It is found in the cytoplasm. It catalyses the reaction AMP + diphosphate = 5-phospho-alpha-D-ribose 1-diphosphate + adenine. Its pathway is purine metabolism; AMP biosynthesis via salvage pathway; AMP from adenine: step 1/1. In terms of biological role, catalyzes a salvage reaction resulting in the formation of AMP, that is energically less costly than de novo synthesis. The chain is Adenine phosphoribosyltransferase from Caldanaerobacter subterraneus subsp. tengcongensis (strain DSM 15242 / JCM 11007 / NBRC 100824 / MB4) (Thermoanaerobacter tengcongensis).